Reading from the N-terminus, the 262-residue chain is Thrombin-like enzyme gyroxin B1.4 (262 aa).

An N-terminal signal peptide occupies residues 1–18; that stretch reads MVLIRVLANLLILQLSYA. Residues 19–262 constitute a propeptide that is removed on maturation; sequence QKSSELVIGG…AGNTIVNCPP (244 aa). The Peptidase S1 domain occupies 25–253; that stretch reads VIGGDECNIN…HLDWIQSIIA (229 aa). 6 cysteine pairs are disulfide-bonded: cysteine 31-cysteine 165, cysteine 52-cysteine 68, cysteine 102-cysteine 260, cysteine 144-cysteine 214, cysteine 176-cysteine 193, and cysteine 204-cysteine 229. Catalysis depends on histidine 67, which acts as the Charge relay system. An N-linked (GlcNAc...) asparagine glycan is attached at asparagine 105. The active-site Charge relay system is the aspartate 112. Serine 208 (charge relay system) is an active-site residue.

Belongs to the peptidase S1 family. Snake venom subfamily. As to quaternary structure, monomer. In terms of tissue distribution, expressed by the venom gland.

The protein resides in the secreted. Thrombin-like snake venom serine protease. Displays a specificity similar to trypsin. Releases only fibrinopeptide A in the conversion of fibrinogen to fibrin. Shows coagulant, esterase and amidase activities. Reversibly increases the permeability of the blood brain barrier (BBB) in mice. Induces the barrel rotation syndrome in mice, which is manifested by gyroxin-like, rapid rolling motions. This syndrome may be due to its effect on BBB permeability, and certainly also to other actions affecting endogenous substrates present in the endothelium, nervous tissues or blood. The sequence is that of Thrombin-like enzyme gyroxin B1.4 from Crotalus durissus terrificus (South American rattlesnake).